We begin with the raw amino-acid sequence, 874 residues long: Alanine--tRNA ligase (874 aa).

Positions 564, 568, 666, and 670 each coordinate Zn(2+).

It belongs to the class-II aminoacyl-tRNA synthetase family. Zn(2+) is required as a cofactor.

Its subcellular location is the cytoplasm. The enzyme catalyses tRNA(Ala) + L-alanine + ATP = L-alanyl-tRNA(Ala) + AMP + diphosphate. Functionally, catalyzes the attachment of alanine to tRNA(Ala) in a two-step reaction: alanine is first activated by ATP to form Ala-AMP and then transferred to the acceptor end of tRNA(Ala). Also edits incorrectly charged Ser-tRNA(Ala) and Gly-tRNA(Ala) via its editing domain. In Carboxydothermus hydrogenoformans (strain ATCC BAA-161 / DSM 6008 / Z-2901), this protein is Alanine--tRNA ligase.